The sequence spans 88 residues: Sec-independent protein translocase protein TatA (88 aa).

A helical membrane pass occupies residues 1 to 21 (MGGISIWQLLIIAVIVVLLFG). The segment at 41 to 88 (KAMGDENQKETNNAEKTTNDADFDTKNLAQKTSTEEKSTTESKNKEQV) is disordered. Basic and acidic residues-rich tracts occupy residues 42–65 (AMGD…DFDT) and 73–88 (STEE…KEQV).

This sequence belongs to the TatA/E family. In terms of assembly, the Tat system comprises two distinct complexes: a TatABC complex, containing multiple copies of TatA, TatB and TatC subunits, and a separate TatA complex, containing only TatA subunits. Substrates initially bind to the TatABC complex, which probably triggers association of the separate TatA complex to form the active translocon.

The protein resides in the cell inner membrane. In terms of biological role, part of the twin-arginine translocation (Tat) system that transports large folded proteins containing a characteristic twin-arginine motif in their signal peptide across membranes. TatA could form the protein-conducting channel of the Tat system. This chain is Sec-independent protein translocase protein TatA, found in Proteus mirabilis (strain HI4320).